We begin with the raw amino-acid sequence, 442 residues long: Tubulin beta chain (442 aa).

8 residues coordinate GTP: Gln-11, Glu-69, Ser-138, Gly-142, Thr-143, Gly-144, Asn-204, and Asn-226. Residue Glu-69 participates in Mg(2+) binding.

Belongs to the tubulin family. In terms of assembly, dimer of alpha and beta chains. A typical microtubule is a hollow water-filled tube with an outer diameter of 25 nm and an inner diameter of 15 nM. Alpha-beta heterodimers associate head-to-tail to form protofilaments running lengthwise along the microtubule wall with the beta-tubulin subunit facing the microtubule plus end conferring a structural polarity. Microtubules usually have 13 protofilaments but different protofilament numbers can be found in some organisms and specialized cells. Mg(2+) is required as a cofactor.

The protein localises to the cytoplasm. It is found in the cytoskeleton. Functionally, tubulin is the major constituent of microtubules, a cylinder consisting of laterally associated linear protofilaments composed of alpha- and beta-tubulin heterodimers. Microtubules grow by the addition of GTP-tubulin dimers to the microtubule end, where a stabilizing cap forms. Below the cap, tubulin dimers are in GDP-bound state, owing to GTPase activity of alpha-tubulin. This chain is Tubulin beta chain (TUB-B), found in Pneumocystis carinii.